Consider the following 495-residue polypeptide: MDYYYDDYYDEYYDHPDQAAARLFHRDLSIEETIKNCVHPSLRFATQYITNFIAINLLFSVLVLIVRKLFPTAQRSLHLLSCVCGAALVYRVIDHGFYHFLQLAVSLYAVQWTLHRWLTGTGRYIKTPFIVIAYGIGNLLVSELLEPSPETWNRIRGTQMILLMKALSLAFDTDDNHSLRSQLTVLSYSGYILCPANIVLGPWISFNDYLTIWKPPAGIEPKQCRSSSGRRMLIHVFRIVTSALMAVGFLLTSNCMIDYLLAPINSWKWVRAYGRALSFRTSHYFIGYLSQCSMMAAAADWHRAEDERSIMLPVSSLYRITSPMAVEFPRSLVQVVTAWNIPMHLWLKRYIFRTTKRPFGTGTAIALTYIISSLLHGLHYRLWITLLTIGSWTFVEHEVRKKLATIYSACVLVGKCPSSCTVHQHKSNSVFCTVINMLFFALNIFNLIYLGCIFESSEGPPDEVQQDKSMFGPWTELNYASHWLLVFAYLFYFVI.

8 consecutive transmembrane segments (helical) span residues 46-66 (TQYI…VLIV), 92-112 (VIDH…AVQW), 184-204 (TVLS…GPWI), 232-252 (MLIH…FLLT), 358-378 (PFGT…LHGL), 403-422 (LATI…SCTV), 434-454 (VINM…GCIF), and 475-495 (TELN…YFVI). His-376 is an active-site residue.

It belongs to the membrane-bound acyltransferase family. Porcupine subfamily.

It localises to the endoplasmic reticulum membrane. It carries out the reaction [Wnt protein]-L-serine + (9Z)-hexadecenoyl-CoA = [Wnt protein]-O-(9Z)-hexadecenoyl-L-serine + CoA. Protein-serine O-palmitoleoyltransferase that acts as a key regulator of the Wnt signaling pathway by mediating the attachment of palmitoleate, a 16-carbon monounsaturated fatty acid (C16:1(9Z)), to Wnt proteins. Serine palmitoleoylation of WNT proteins is required for efficient binding to frizzled receptors. In Anopheles gambiae (African malaria mosquito), this protein is Protein-serine O-palmitoleoyltransferase porcupine.